Consider the following 154-residue polypeptide: Urease accessory protein UreE (154 aa).

Residues 135-154 are disordered; sequence PENGAYHGTGGHHHHHHDHE. Over residues 144-154 the composition is skewed to basic residues; it reads GGHHHHHHDHE.

The protein belongs to the UreE family.

It localises to the cytoplasm. Its function is as follows. Involved in urease metallocenter assembly. Binds nickel. Probably functions as a nickel donor during metallocenter assembly. The protein is Urease accessory protein UreE of Teredinibacter turnerae (strain ATCC 39867 / T7901).